We begin with the raw amino-acid sequence, 114 residues long: T cell receptor beta variable 5-1 (114 aa).

The signal sequence occupies residues 1-21; that stretch reads MGSRLLCWVLLCLLGAGPVKA. The 93-residue stretch at 22–114 folds into the Ig-like domain; the sequence is GVTQTPRYLI…SALYLCASSL (93 aa). Cys-42 and Cys-110 are joined by a disulfide. Asn-96 is a glycosylation site (N-linked (GlcNAc...) asparagine).

In terms of assembly, alpha-beta TR is a heterodimer composed of an alpha and beta chain; disulfide-linked. The alpha-beta TR is associated with the transmembrane signaling CD3 coreceptor proteins to form the TR-CD3 (TcR or TCR). The assembly of alpha-beta TR heterodimers with CD3 occurs in the endoplasmic reticulum where a single alpha-beta TR heterodimer associates with one CD3D-CD3E heterodimer, one CD3G-CD3E heterodimer and one CD247 homodimer forming a stable octameric structure. CD3D-CD3E and CD3G-CD3E heterodimers preferentially associate with TR alpha and TR beta chains, respectively. The association of the CD247 homodimer is the last step of TcR assembly in the endoplasmic reticulum and is required for transport to the cell surface.

It is found in the cell membrane. V region of the variable domain of T cell receptor (TR) beta chain that participates in the antigen recognition. Alpha-beta T cell receptors are antigen specific receptors which are essential to the immune response and are present on the cell surface of T lymphocytes. Recognize peptide-major histocompatibility (MH) (pMH) complexes that are displayed by antigen presenting cells (APC), a prerequisite for efficient T cell adaptive immunity against pathogens. Binding of alpha-beta TR to pMH complex initiates TR-CD3 clustering on the cell surface and intracellular activation of LCK that phosphorylates the ITAM motifs of CD3G, CD3D, CD3E and CD247 enabling the recruitment of ZAP70. In turn ZAP70 phosphorylates LAT, which recruits numerous signaling molecules to form the LAT signalosome. The LAT signalosome propagates signal branching to three major signaling pathways, the calcium, the mitogen-activated protein kinase (MAPK) kinase and the nuclear factor NF-kappa-B (NF-kB) pathways, leading to the mobilization of transcription factors that are critical for gene expression and essential for T cell growth and differentiation. The T cell repertoire is generated in the thymus, by V-(D)-J rearrangement. This repertoire is then shaped by intrathymic selection events to generate a peripheral T cell pool of self-MH restricted, non-autoaggressive T cells. Post-thymic interaction of alpha-beta TR with the pMH complexes shapes TR structural and functional avidity. The protein is T cell receptor beta variable 5-1 of Homo sapiens (Human).